Here is a 1616-residue protein sequence, read N- to C-terminus: Helicase SWR1 (1616 aa).

A compositionally biased stretch (basic residues) spans 1-10 (MARGGSRRRN). Disordered regions lie at residues 1-53 (MARG…IKKE) and 185-238 (KTLE…SDMD). Positions 11 to 26 (TSVISTQKIEPSNEST) are enriched in polar residues. The segment covering 200 to 209 (PSKTSKGNQK) has biased composition (low complexity). Residues 396–468 (IPKTQGVTIH…KEQNLKRISK (73 aa)) enclose the HSA domain. Disordered regions lie at residues 521–565 (NKSS…VNMD), 583–614 (IDQS…DANK), and 645–774 (LIEK…VPLP). Residues 529 to 538 (EVDTENENET) are compositionally biased toward acidic residues. The segment covering 645-654 (LIEKFSKEDE) has biased composition (basic and acidic residues). Acidic residues predominate over residues 705–737 (TEDEEDSNDDVSADSDGNVSDDENMSTTDEEDE). A compositionally biased stretch (basic and acidic residues) spans 738 to 751 (PKTPKSSEDPKMDE). The span at 752 to 763 (KENESDVLEEEV) shows a compositional bias: acidic residues. One can recognise a Helicase ATP-binding domain in the interval 793–958 (ASLYNNGTNG…WSLLYFLMPS (166 aa)). 806–813 (DEMGLGKT) provides a ligand contact to ATP. The DEAH box signature appears at 909-912 (DEAH). The segment at 992–1013 (NGTSSDVIDENDKTTQRMDEET) is disordered. Over residues 1001–1013 (ENDKTTQRMDEET) the composition is skewed to basic and acidic residues. In terms of domain architecture, Helicase C-terminal spans 1333–1486 (KLQKLATLLQ…NVVIQEGEFT (154 aa)). The tract at residues 1545 to 1576 (DDEDFDEESKAATNTATPSQTPGPDTAGSGIV) is disordered. Over residues 1555 to 1567 (AATNTATPSQTPG) the composition is skewed to polar residues.

The protein belongs to the SNF2/RAD54 helicase family. SWR1 subfamily. Component of the SWR1 chromatin-remodeling complex.

The protein resides in the nucleus. The enzyme catalyses ATP + H2O = ADP + phosphate + H(+). In terms of biological role, catalytic component of the SWR1 complex which mediates the ATP-dependent exchange of histone H2A for the H2A variant HZT1 leading to transcriptional regulation of selected genes by chromatin remodeling. The sequence is that of Helicase SWR1 (SWR1) from Debaryomyces hansenii (strain ATCC 36239 / CBS 767 / BCRC 21394 / JCM 1990 / NBRC 0083 / IGC 2968) (Yeast).